A 274-amino-acid chain; its full sequence is MSVQSKIKRVTVPEIRARKGAEPIVSLTAYHAHTARYIDPYVDFLLVGDSLGMVMYGMETTLGVTLDMMIAHGAAVVRGTERALVVVDMPFGSYEESPEIAFRNACRVIKETGCTAVKLEGGTRIAETIRYLTLRGIPVMAHIGLTPQNIQVMGGFKTQGREEGEWAAIEADAKAVAEAGAFAVVLEGMAEPLAARITGQIDIPTIGIGASPNCDGQILVLEDMLGLSPRPAKFVREFATLGAQIAGAAEAYARAVRERSFPAAEHTYSMKKAK.

Positions 49 and 88 each coordinate Mg(2+). 3-methyl-2-oxobutanoate-binding positions include 49–50, aspartate 88, and lysine 118; that span reads DS. Glutamate 120 is a binding site for Mg(2+). The active-site Proton acceptor is the glutamate 187.

This sequence belongs to the PanB family. As to quaternary structure, homodecamer; pentamer of dimers. Mg(2+) is required as a cofactor.

The protein resides in the cytoplasm. The catalysed reaction is 3-methyl-2-oxobutanoate + (6R)-5,10-methylene-5,6,7,8-tetrahydrofolate + H2O = 2-dehydropantoate + (6S)-5,6,7,8-tetrahydrofolate. It participates in cofactor biosynthesis; (R)-pantothenate biosynthesis; (R)-pantoate from 3-methyl-2-oxobutanoate: step 1/2. Its function is as follows. Catalyzes the reversible reaction in which hydroxymethyl group from 5,10-methylenetetrahydrofolate is transferred onto alpha-ketoisovalerate to form ketopantoate. This Parvibaculum lavamentivorans (strain DS-1 / DSM 13023 / NCIMB 13966) protein is 3-methyl-2-oxobutanoate hydroxymethyltransferase.